A 647-amino-acid polypeptide reads, in one-letter code: 2',3'-cyclic-nucleotide 2'-phosphodiesterase/3'-nucleotidase (647 aa).

A signal peptide spans 1–19; that stretch reads MIKFSATLLATLIAASVNA. 7 residues coordinate a divalent metal cation: D31, H33, D76, N116, H225, H257, and H259. Residues Y440 and 544 to 550 contribute to the substrate site; that span reads YRAYGGK.

It belongs to the 5'-nucleotidase family. The cofactor is a divalent metal cation.

It localises to the periplasm. The enzyme catalyses a nucleoside 2',3'-cyclic phosphate + H2O = a nucleoside 3'-phosphate + H(+). The catalysed reaction is a ribonucleoside 3'-phosphate + H2O = a ribonucleoside + phosphate. In terms of biological role, this bifunctional enzyme catalyzes two consecutive reactions during ribonucleic acid degradation. Converts a 2',3'-cyclic nucleotide to a 3'-nucleotide and then the 3'-nucleotide to the corresponding nucleoside and phosphate. This chain is 2',3'-cyclic-nucleotide 2'-phosphodiesterase/3'-nucleotidase (cpdB), found in Salmonella typhimurium (strain LT2 / SGSC1412 / ATCC 700720).